The chain runs to 123 residues: Small ribosomal subunit protein uS12 (123 aa).

A disordered region spans residues 1-29 (MPTINQLVRKGREPQKAKSKVPAMEQNPQ). Position 89 is a 3-methylthioaspartic acid (Asp-89).

It belongs to the universal ribosomal protein uS12 family. As to quaternary structure, part of the 30S ribosomal subunit. Contacts proteins S8 and S17. May interact with IF1 in the 30S initiation complex.

With S4 and S5 plays an important role in translational accuracy. Functionally, interacts with and stabilizes bases of the 16S rRNA that are involved in tRNA selection in the A site and with the mRNA backbone. Located at the interface of the 30S and 50S subunits, it traverses the body of the 30S subunit contacting proteins on the other side and probably holding the rRNA structure together. The combined cluster of proteins S8, S12 and S17 appears to hold together the shoulder and platform of the 30S subunit. This chain is Small ribosomal subunit protein uS12, found in Novosphingobium aromaticivorans (strain ATCC 700278 / DSM 12444 / CCUG 56034 / CIP 105152 / NBRC 16084 / F199).